A 221-amino-acid polypeptide reads, in one-letter code: MVKTWEEFLKQEAKQPYFIELMEAVKDARAKGNVYPSEEDMFSCFRLCPYNQVKVVILGQDPYHGPGQAHGLSFSVQKDVRIPPSLRNIYKELKTDLDIEPADHGYLAKWAEQGVLLMNTSWSVEEGKAGSHKKLGWATFTDHVLEELNNYDKPLVFILWGNHAIKAASGITNPQHLIIKGVHPSPLAASRGFFGSKPFSKTNAFLEEHERKPIDWDLNEQ.

The active-site Proton acceptor is the Asp61.

Belongs to the uracil-DNA glycosylase (UDG) superfamily. UNG family.

The protein localises to the cytoplasm. The catalysed reaction is Hydrolyzes single-stranded DNA or mismatched double-stranded DNA and polynucleotides, releasing free uracil.. Its function is as follows. Excises uracil residues from the DNA which can arise as a result of misincorporation of dUMP residues by DNA polymerase or due to deamination of cytosine. The polypeptide is Uracil-DNA glycosylase 1 (Listeria monocytogenes serovar 1/2a (strain ATCC BAA-679 / EGD-e)).